A 300-amino-acid polypeptide reads, in one-letter code: Ribosomal RNA small subunit methyltransferase H (300 aa).

S-adenosyl-L-methionine contacts are provided by residues 33–35 (AGH), aspartate 52, phenylalanine 86, aspartate 97, and glutamine 104.

Belongs to the methyltransferase superfamily. RsmH family.

Its subcellular location is the cytoplasm. The catalysed reaction is cytidine(1402) in 16S rRNA + S-adenosyl-L-methionine = N(4)-methylcytidine(1402) in 16S rRNA + S-adenosyl-L-homocysteine + H(+). Functionally, specifically methylates the N4 position of cytidine in position 1402 (C1402) of 16S rRNA. The chain is Ribosomal RNA small subunit methyltransferase H from Aliarcobacter butzleri (strain RM4018) (Arcobacter butzleri).